The sequence spans 467 residues: Cysteine--tRNA ligase (467 aa).

Zn(2+) is bound at residue cysteine 29. The short motif at 31–41 (PTVYNYVHIGN) is the 'HIGH' region element. Positions 209, 234, and 238 each coordinate Zn(2+). The 'KMSKS' region motif lies at 267 to 271 (KMSKS). Lysine 270 serves as a coordination point for ATP.

This sequence belongs to the class-I aminoacyl-tRNA synthetase family. In terms of assembly, monomer. Zn(2+) is required as a cofactor.

The protein localises to the cytoplasm. The catalysed reaction is tRNA(Cys) + L-cysteine + ATP = L-cysteinyl-tRNA(Cys) + AMP + diphosphate. The polypeptide is Cysteine--tRNA ligase (Xylella fastidiosa (strain 9a5c)).